The following is a 362-amino-acid chain: Molybdopterin synthase catalytic subunit (362 aa).

Residues 101-102 (HR), lysine 117, and 124-126 (KKE) each bind substrate.

Belongs to the MoaE family. MOCS2B subfamily. As to quaternary structure, heterotetramer; composed of 2 small (Mocs2A) and 2 large (Mocs2B) subunits.

It localises to the cytoplasm. It catalyses the reaction 2 [molybdopterin-synthase sulfur-carrier protein]-C-terminal-Gly-aminoethanethioate + cyclic pyranopterin phosphate + H2O = molybdopterin + 2 [molybdopterin-synthase sulfur-carrier protein]-C-terminal Gly-Gly + 2 H(+). The protein operates within cofactor biosynthesis; molybdopterin biosynthesis. In terms of biological role, catalytic subunit of the molybdopterin synthase complex, a complex that catalyzes the conversion of precursor Z into molybdopterin. Acts by mediating the incorporation of 2 sulfur atoms from thiocarboxylated Mocs2A into precursor Z to generate a dithiolene group. The polypeptide is Molybdopterin synthase catalytic subunit (Drosophila grimshawi (Hawaiian fruit fly)).